The chain runs to 558 residues: Phosphatidylserine lipase ABHD16A (558 aa).

Transmembrane regions (helical) follow at residues 60–80 (ILAL…FAFF) and 93–113 (VVPF…VACL). Topologically, residues 114–558 (RGIGRWTNPQ…AQNFQMPWHL (445 aa)) are cytoplasmic. Positions 281–407 (LVICCEGNAG…LVTRTVRQHL (127 aa)) constitute an AB hydrolase-1 domain. Residues Ser355, Asp430, and His507 each act as charge relay system in the active site.

The protein belongs to the AB hydrolase superfamily. ABHD16 family.

The protein resides in the membrane. It carries out the reaction 1-heptadecanoyl-2-(5Z,8Z,11Z,14Z-eicosatetraenoyl)-sn-glycero-3-phosphoserine + H2O = 1-heptadecanoyl-sn-glycero-3-phosphoserine + (5Z,8Z,11Z,14Z)-eicosatetraenoate + H(+). The enzyme catalyses 1-hexadecanoyl-2-(9Z-octadecenoyl)-sn-glycero-3-phospho-L-serine + H2O = 1-hexadecanoyl-sn-glycero-3-phospho-L-serine + (9Z)-octadecenoate + H(+). The catalysed reaction is 1-octadecanoyl-2-(9Z,12Z-octadecadienoyl)-sn-glycero-3-phosphoserine + H2O = 1-octadecanoyl-sn-glycero-3-phosphoserine + (9Z,12Z)-octadecadienoate + H(+). It catalyses the reaction 1-heptadecanoyl-2-(5Z,8Z,11Z,14Z-eicosatetraenoyl)-sn-glycero-3-phosphocholine + H2O = 1-heptadecanoyl-sn-glycero-3-phosphocholine + (5Z,8Z,11Z,14Z)-eicosatetraenoate + H(+). It carries out the reaction 1-hexadecanoyl-2-(9Z-octadecenoyl)-sn-glycero-3-phosphoglycerol + H2O = 1-hexadecanoyl-sn-glycero-3-phosphoglycerol + (9Z)-octadecenoate + H(+). The enzyme catalyses 1-hexadecanoyl-2-(9Z-octadecenoyl)-sn-glycero-3-phospho-(1D-myo-inositol) + H2O = 1-hexadecanoyl-sn-glycero-3-phospho-(1D-myo-inositol) + (9Z)-octadecenoate + H(+). The catalysed reaction is 1-heptadecanoyl-2-(5Z,8Z,11Z,14Z-eicosatetraenoyl)-sn-glycero-3-phosphoethanolamine + H2O = 1-heptadecanoyl-sn-glycero-3-phosphoethanolamine + (5Z,8Z,11Z,14Z)-eicosatetraenoate + H(+). It catalyses the reaction 1-hexadecanoyl-2-(9Z-octadecenoyl)-sn-glycero-3-phospho-(1'-sn-glycerol) + H2O = 1-hexadecanoyl-sn-glycero-3-phospho-(1'-sn-glycerol) + (9Z)-octadecenoate + H(+). It carries out the reaction Hydrolyzes glycerol monoesters of long-chain fatty acids.. The enzyme catalyses 1-tetradecanoylglycerol + H2O = tetradecanoate + glycerol + H(+). The catalysed reaction is 2-hexadecanoylglycerol + H2O = glycerol + hexadecanoate + H(+). It catalyses the reaction 1-(9Z-octadecenoyl)-glycerol + H2O = glycerol + (9Z)-octadecenoate + H(+). It carries out the reaction 2-(9Z-octadecenoyl)-glycerol + H2O = glycerol + (9Z)-octadecenoate + H(+). The enzyme catalyses 2-(9Z,12Z-octadecadienoyl)-glycerol + H2O = (9Z,12Z)-octadecadienoate + glycerol + H(+). The catalysed reaction is 1-(5Z,8Z,11Z,14Z-eicosatetraenoyl)-glycerol + H2O = glycerol + (5Z,8Z,11Z,14Z)-eicosatetraenoate + H(+). It catalyses the reaction 2-(5Z,8Z,11Z,14Z-eicosatetraenoyl)-glycerol + H2O = glycerol + (5Z,8Z,11Z,14Z)-eicosatetraenoate + H(+). It carries out the reaction prostaglandin D2-1-glycerol ester + H2O = prostaglandin D2 + glycerol + H(+). The enzyme catalyses 2-glyceryl-15-deoxy-Delta(12,14)-prostaglandin J2 + H2O = 15-deoxy-Delta(12,14)-prostaglandin J2 + glycerol + H(+). The catalysed reaction is 1-(9Z,12Z-octadecadienoyl)-glycerol + H2O = (9Z,12Z)-octadecadienoate + glycerol + H(+). In terms of biological role, phosphatidylserine (PS) lipase that mediates the hydrolysis of phosphatidylserine to generate lysophosphatidylserine (LPS). LPS constitutes a class of signaling lipids that regulates immunological and neurological processes. Has no activity towards diacylglycerol, triacylglycerol or lysophosphatidylserine lipase. Also has monoacylglycerol lipase activity, with preference for 1-(9Z,12Z-octadecadienoyl)-glycerol (1-LG) and 2-glyceryl-15-deoxy-Delta(12,14)-prostaglandin J2 (15d-PGJ(2)-G). This is Phosphatidylserine lipase ABHD16A from Macaca fascicularis (Crab-eating macaque).